The chain runs to 200 residues: Holliday junction branch migration complex subunit RuvA (200 aa).

The domain I stretch occupies residues Met-1–Ala-63. The tract at residues Asp-64–Ala-142 is domain II. The segment at Gly-143–Glu-151 is flexible linker. The segment at Glu-151–Arg-200 is domain III.

The protein belongs to the RuvA family. Homotetramer. Forms an RuvA(8)-RuvB(12)-Holliday junction (HJ) complex. HJ DNA is sandwiched between 2 RuvA tetramers; dsDNA enters through RuvA and exits via RuvB. An RuvB hexamer assembles on each DNA strand where it exits the tetramer. Each RuvB hexamer is contacted by two RuvA subunits (via domain III) on 2 adjacent RuvB subunits; this complex drives branch migration. In the full resolvosome a probable DNA-RuvA(4)-RuvB(12)-RuvC(2) complex forms which resolves the HJ.

It is found in the cytoplasm. In terms of biological role, the RuvA-RuvB-RuvC complex processes Holliday junction (HJ) DNA during genetic recombination and DNA repair, while the RuvA-RuvB complex plays an important role in the rescue of blocked DNA replication forks via replication fork reversal (RFR). RuvA specifically binds to HJ cruciform DNA, conferring on it an open structure. The RuvB hexamer acts as an ATP-dependent pump, pulling dsDNA into and through the RuvAB complex. HJ branch migration allows RuvC to scan DNA until it finds its consensus sequence, where it cleaves and resolves the cruciform DNA. The sequence is that of Holliday junction branch migration complex subunit RuvA from Salinispora tropica (strain ATCC BAA-916 / DSM 44818 / JCM 13857 / NBRC 105044 / CNB-440).